The chain runs to 265 residues: Putative 2-amino-3,7-dideoxy-D-threo-hept-6-ulosonate synthase 2 (265 aa).

Aspartate 27 (proton acceptor) is an active-site residue. Residues 27-31 (DHGVS) and 147-149 (YPR) contribute to the 1-deoxy-D-threo-hexo-2,5-diulose 6-phosphate site. Tyrosine 147 serves as the catalytic Proton donor. The active-site Schiff-base intermediate with substrate is the lysine 177. Residues 202 to 203 (GG) and 230 to 231 (GR) each bind 1-deoxy-D-threo-hexo-2,5-diulose 6-phosphate.

It belongs to the DeoC/FbaB aldolase family. ADHS subfamily. Homodecamer.

It catalyses the reaction 1-deoxy-D-threo-hexo-2,5-diulose 6-phosphate + L-aspartate 4-semialdehyde = 2,3-dioxopropyl phosphate + 2-amino-2,3,7-trideoxy-D-lyxo-hept-6-ulosonate. Its function is as follows. Catalyzes a transaldol reaction between 6-deoxy-5-ketofructose 1-phosphate (DKFP) and L-aspartate semialdehyde (ASA) with an elimination of hydroxypyruvaldehyde phosphate to yield 2-amino-3,7-dideoxy-D-threo-hept-6-ulosonate (ADH). Plays a key role in an alternative pathway of the biosynthesis of 3-dehydroquinate (DHQ), which is involved in the canonical pathway for the biosynthesis of aromatic amino acids. The polypeptide is Putative 2-amino-3,7-dideoxy-D-threo-hept-6-ulosonate synthase 2 (Archaeoglobus fulgidus (strain ATCC 49558 / DSM 4304 / JCM 9628 / NBRC 100126 / VC-16)).